The following is a 404-amino-acid chain: Riboflavin biosynthesis protein RibBA (404 aa).

Positions 1–204 are DHBP synthase; the sequence is MEELKLNTIE…IRDLIAYRLK (204 aa). D-ribulose 5-phosphate is bound by residues 30–31, D35, 143–147, and E167; these read RE and RAGHT. Position 31 (E31) interacts with Mg(2+). H146 contacts Mg(2+). The segment at 205-404 is GTP cyclohydrolase II; it reads QESLVEKGVE…RMGHTLHFNK (200 aa). 255–259 is a GTP binding site; it reads RVHSS. Zn(2+) is bound by residues C260, C271, and C273. GTP is bound by residues Q276, 298–300, and T320; that span reads EGR. D332 acts as the Proton acceptor; for GTP cyclohydrolase activity in catalysis. R334 serves as the catalytic Nucleophile; for GTP cyclohydrolase activity. Residues T355 and K360 each contribute to the GTP site.

In the N-terminal section; belongs to the DHBP synthase family. It in the C-terminal section; belongs to the GTP cyclohydrolase II family. It depends on Mg(2+) as a cofactor. Mn(2+) is required as a cofactor. The cofactor is Zn(2+).

It carries out the reaction D-ribulose 5-phosphate = (2S)-2-hydroxy-3-oxobutyl phosphate + formate + H(+). The enzyme catalyses GTP + 4 H2O = 2,5-diamino-6-hydroxy-4-(5-phosphoribosylamino)-pyrimidine + formate + 2 phosphate + 3 H(+). The protein operates within cofactor biosynthesis; riboflavin biosynthesis; 2-hydroxy-3-oxobutyl phosphate from D-ribulose 5-phosphate: step 1/1. It participates in cofactor biosynthesis; riboflavin biosynthesis; 5-amino-6-(D-ribitylamino)uracil from GTP: step 1/4. In terms of biological role, catalyzes the conversion of D-ribulose 5-phosphate to formate and 3,4-dihydroxy-2-butanone 4-phosphate. Catalyzes the conversion of GTP to 2,5-diamino-6-ribosylamino-4(3H)-pyrimidinone 5'-phosphate (DARP), formate and pyrophosphate. This chain is Riboflavin biosynthesis protein RibBA, found in Phocaeicola vulgatus (strain ATCC 8482 / DSM 1447 / JCM 5826 / CCUG 4940 / NBRC 14291 / NCTC 11154) (Bacteroides vulgatus).